Reading from the N-terminus, the 163-residue chain is 16S rRNA aminocarboxypropyltransferase (163 aa).

S-adenosyl-L-methionine contacts are provided by Thr-18, Ile-66, Leu-87, and Ser-106.

It belongs to the TDD superfamily. TSR3 family.

It localises to the cytoplasm. It carries out the reaction an N(1)-methylpseudouridine in rRNA + S-adenosyl-L-methionine = N(1)-methyl-N(3)-[(3S)-3-amino-3-carboxypropyl]pseudouridine in rRNA + S-methyl-5'-thioadenosine + H(+). Aminocarboxypropyltransferase that catalyzes the aminocarboxypropyl transfer on pseudouridine corresponding to position 914 in M.jannaschii 16S rRNA. It constitutes the last step in biosynthesis of the hypermodified N1-methyl-N3-(3-amino-3-carboxypropyl) pseudouridine (m1acp3-Psi). The polypeptide is 16S rRNA aminocarboxypropyltransferase (Thermoplasma acidophilum (strain ATCC 25905 / DSM 1728 / JCM 9062 / NBRC 15155 / AMRC-C165)).